The chain runs to 214 residues: Pyridoxine/pyridoxamine 5'-phosphate oxidase (214 aa).

Substrate-binding positions include 8-11 (RKSY) and K67. FMN is bound by residues 62–67 (RVVLLK), 77–78 (YT), K84, and Q106. Substrate contacts are provided by Y124, R128, and S132. Residues 141–142 (QS) and W186 contribute to the FMN site. 192 to 194 (RLH) contacts substrate. R196 serves as a coordination point for FMN.

Belongs to the pyridoxamine 5'-phosphate oxidase family. Homodimer. Requires FMN as cofactor.

The enzyme catalyses pyridoxamine 5'-phosphate + O2 + H2O = pyridoxal 5'-phosphate + H2O2 + NH4(+). It carries out the reaction pyridoxine 5'-phosphate + O2 = pyridoxal 5'-phosphate + H2O2. It participates in cofactor metabolism; pyridoxal 5'-phosphate salvage; pyridoxal 5'-phosphate from pyridoxamine 5'-phosphate: step 1/1. Its pathway is cofactor metabolism; pyridoxal 5'-phosphate salvage; pyridoxal 5'-phosphate from pyridoxine 5'-phosphate: step 1/1. In terms of biological role, catalyzes the oxidation of either pyridoxine 5'-phosphate (PNP) or pyridoxamine 5'-phosphate (PMP) into pyridoxal 5'-phosphate (PLP). In Flavobacterium psychrophilum (strain ATCC 49511 / DSM 21280 / CIP 103535 / JIP02/86), this protein is Pyridoxine/pyridoxamine 5'-phosphate oxidase.